The chain runs to 361 residues: Chorismate synthase (361 aa).

NADP(+) is bound by residues Arg48 and Arg54. Residues 125 to 127, 238 to 239, Gly278, 293 to 297, and Arg319 contribute to the FMN site; these read RSS, NA, and KPTSS.

The protein belongs to the chorismate synthase family. As to quaternary structure, homotetramer. FMNH2 serves as cofactor.

The catalysed reaction is 5-O-(1-carboxyvinyl)-3-phosphoshikimate = chorismate + phosphate. It participates in metabolic intermediate biosynthesis; chorismate biosynthesis; chorismate from D-erythrose 4-phosphate and phosphoenolpyruvate: step 7/7. Its function is as follows. Catalyzes the anti-1,4-elimination of the C-3 phosphate and the C-6 proR hydrogen from 5-enolpyruvylshikimate-3-phosphate (EPSP) to yield chorismate, which is the branch point compound that serves as the starting substrate for the three terminal pathways of aromatic amino acid biosynthesis. This reaction introduces a second double bond into the aromatic ring system. The polypeptide is Chorismate synthase (Edwardsiella ictaluri (strain 93-146)).